A 303-amino-acid chain; its full sequence is Crk-like protein (303 aa).

One can recognise an SH2 domain in the interval 14–102 (WYMGPVSRQE…LDTTTLIEPA (89 aa)). Residues 123 to 183 (DNLEYVRTLY…PVPYVEKLVR (61 aa)) form the SH3 1 domain. Residues Tyr127 and Tyr207 each carry the phosphotyrosine modification. Positions 184–234 (SSPHGKHGNRNSNSYGIPEPAHAYAQPQTTTPLPAVSGSPGAAITPLPSTQ) are disordered. The 62-residue stretch at 235–296 (NGPVFAKAIQ…PFTHVKIFDP (62 aa)) folds into the SH3 2 domain.

The protein belongs to the CRK family. Interacts with tyrosine-phosphorylated EPOR and INPP5D/SHIP1. Interacts with DOCK2 and DOCK5 via its first SH3 domain. Interacts with phosphorylated CBLB and IRS4. Interacts with BCAR1/CAS and NEDD9/HEF1.

Functionally, may mediate the transduction of intracellular signals. The chain is Crk-like protein (CRKL) from Homo sapiens (Human).